The following is a 307-amino-acid chain: MRIVFAGTPDFAVPSLRSVTQRADVVAVYTQPDRPAGRGRELTPSPVKLEAVARGLPVYQPQTLRSPEMLEQLRALRPDLIVVVAYGVILPEAVLAIPDDGCWNVHASLLPRWRGAAPIQRAIEAGDTETGVCLMQMEAGLDTGPVLMSLKTPINAYETSGQLHDRLAEMGAQLLSDGLGLLRAGLRPVPQPQLAAGVTYAHKLGKVEAQLDWEQPAERLACRVRAFQPWPVAEVVLCGERVRIHEALALDLDHSQPPGTVLAASKEGIDVACLQGALRLCRLQREGGKAITAADYLNARRDLQVRA.

A (6S)-5,6,7,8-tetrahydrofolate-binding site is contributed by 108–111 (SLLP).

The protein belongs to the Fmt family.

The catalysed reaction is L-methionyl-tRNA(fMet) + (6R)-10-formyltetrahydrofolate = N-formyl-L-methionyl-tRNA(fMet) + (6S)-5,6,7,8-tetrahydrofolate + H(+). In terms of biological role, attaches a formyl group to the free amino group of methionyl-tRNA(fMet). The formyl group appears to play a dual role in the initiator identity of N-formylmethionyl-tRNA by promoting its recognition by IF2 and preventing the misappropriation of this tRNA by the elongation apparatus. This Xylella fastidiosa (strain 9a5c) protein is Methionyl-tRNA formyltransferase.